The primary structure comprises 68 residues: Sec-independent protein translocase protein TatA (68 aa).

The chain crosses the membrane as a helical span at residues 1-21; it reads MGSFSIWHWLIVLAVVLLLFG. Positions 48 to 68 are disordered; it reads AAAADKSIDGKTVDHKSDEVR. Basic and acidic residues predominate over residues 53–68; sequence KSIDGKTVDHKSDEVR.

Belongs to the TatA/E family. As to quaternary structure, the Tat system comprises two distinct complexes: a TatABC complex, containing multiple copies of TatA, TatB and TatC subunits, and a separate TatA complex, containing only TatA subunits. Substrates initially bind to the TatABC complex, which probably triggers association of the separate TatA complex to form the active translocon.

It is found in the cell inner membrane. Part of the twin-arginine translocation (Tat) system that transports large folded proteins containing a characteristic twin-arginine motif in their signal peptide across membranes. TatA could form the protein-conducting channel of the Tat system. The protein is Sec-independent protein translocase protein TatA of Sinorhizobium medicae (strain WSM419) (Ensifer medicae).